A 556-amino-acid polypeptide reads, in one-letter code: Peptide chain release factor 3 (556 aa).

Residues 28–297 (QQRRNFAIIS…AFLDYALKPG (270 aa)) form the tr-type G domain. Residues 37–44 (SHPDAGKT), 105–109 (DTPGH), and 159–162 (NKMD) each bind GTP.

The protein belongs to the TRAFAC class translation factor GTPase superfamily. Classic translation factor GTPase family. PrfC subfamily.

The protein resides in the cytoplasm. Its function is as follows. Increases the formation of ribosomal termination complexes and stimulates activities of RF-1 and RF-2. It binds guanine nucleotides and has strong preference for UGA stop codons. It may interact directly with the ribosome. The stimulation of RF-1 and RF-2 is significantly reduced by GTP and GDP, but not by GMP. The polypeptide is Peptide chain release factor 3 (Synechococcus sp. (strain ATCC 27144 / PCC 6301 / SAUG 1402/1) (Anacystis nidulans)).